Reading from the N-terminus, the 385-residue chain is MKWSVRGACAALSSCLLLACALSAAAVGLKCFSLGSELRGEPFRLGAAAGAFYSGLLLAAGLSLLGAALLCCGPRDAPLAGSEPGPGLGVPAAPAGAPEATPGESGAAAGAPGPVSSQNLLLLGVLVFMLGVLSAFAGAVIDGDTVSLVERKYSHYCLPPRAPGSSPGSAPGSTPGSAPGSAPGSAPGSAPGAPRARSTLDSATSAKCRQLKDYQRGLVLSTVFNSLECLLGLLSLLLVKNYKSSQARRGRRGRRRGGRALARPRGGSGLRAQPPASRARRGRRGRRGRRLQQRPSEASILSPEESDLAAPGDCAGFAAHHAVSYINVGVLHALDEAGAEVRCGGHPSVELPGYAPSDPDLNASYPYCCRPPCETPRPWETHRAC.

2 consecutive transmembrane segments (helical) span residues 9 to 29 and 50 to 70; these read CAAL…AVGL and GAFY…AALL. The tract at residues 83–111 is disordered; sequence EPGPGLGVPAAPAGAPEATPGESGAAAGA. Residues 121-141 traverse the membrane as a helical segment; sequence LLLGVLVFMLGVLSAFAGAVI. The disordered stretch occupies residues 160–203; sequence PRAPGSSPGSAPGSTPGSAPGSAPGSAPGSAPGAPRARSTLDSA. Low complexity predominate over residues 163-197; the sequence is PGSSPGSAPGSTPGSAPGSAPGSAPGSAPGAPRAR. The chain crosses the membrane as a helical span at residues 219–239; the sequence is VLSTVFNSLECLLGLLSLLLV. Positions 245-305 are disordered; that stretch reads SQARRGRRGR…SEASILSPEE (61 aa). Positions 246–258 are enriched in basic residues; that stretch reads QARRGRRGRRRGG. The segment covering 259 to 277 has biased composition (low complexity); it reads RALARPRGGSGLRAQPPAS. Residues 278 to 292 are compositionally biased toward basic residues; it reads RARRGRRGRRGRRLQ.

It localises to the membrane. In Homo sapiens (Human), this protein is Transmembrane protein 271.